Consider the following 1482-residue polypeptide: Chromosome partition protein MukB (1482 aa).

34 to 41 (GGNGAGKS) lines the ATP pocket. Positions 333-665 (ASDHLNLVQT…LEKQIERLSQ (333 aa)) form a coiled coil. Positions 666–783 (PSGAEDSRMI…ELPLFGRAAR (118 aa)) are flexible hinge. Coiled-coil stretches lie at residues 784–1116 (ENRL…AKAG) and 1209–1260 (VDAI…MLNQ).

The protein belongs to the SMC family. MukB subfamily. As to quaternary structure, homodimerization via its hinge domain. Binds to DNA via its C-terminal region. Interacts, and probably forms a ternary complex, with MukE and MukF via its C-terminal region. The complex formation is stimulated by calcium or magnesium. Interacts with tubulin-related protein FtsZ.

The protein resides in the cytoplasm. It is found in the nucleoid. Plays a central role in chromosome condensation, segregation and cell cycle progression. Functions as a homodimer, which is essential for chromosome partition. Involved in negative DNA supercoiling in vivo, and by this means organize and compact chromosomes. May achieve or facilitate chromosome segregation by condensation DNA from both sides of a centrally located replisome during cell division. This Photorhabdus laumondii subsp. laumondii (strain DSM 15139 / CIP 105565 / TT01) (Photorhabdus luminescens subsp. laumondii) protein is Chromosome partition protein MukB.